We begin with the raw amino-acid sequence, 373 residues long: D-alanine--D-alanine ligase A (373 aa).

The ATP-grasp domain occupies 146–355; that stretch reads KRLAEFAGIP…YGELLSRLVD (210 aa). 179 to 234 provides a ligand contact to ATP; that stretch reads VEGLSLPVFVKPCNMGSSVGIHKVKTQDALEAALDDAFRYDVKVLVQQGIDAREIE. Residues aspartate 308, glutamate 322, and asparagine 324 each coordinate Mg(2+).

Belongs to the D-alanine--D-alanine ligase family. It depends on Mg(2+) as a cofactor. The cofactor is Mn(2+).

The protein resides in the cytoplasm. It carries out the reaction 2 D-alanine + ATP = D-alanyl-D-alanine + ADP + phosphate + H(+). It functions in the pathway cell wall biogenesis; peptidoglycan biosynthesis. Cell wall formation. This is D-alanine--D-alanine ligase A from Bradyrhizobium diazoefficiens (strain JCM 10833 / BCRC 13528 / IAM 13628 / NBRC 14792 / USDA 110).